The following is a 209-amino-acid chain: Translation initiation factor 2 subunit beta (209 aa).

One can recognise a TRAM domain in the interval Thr-144–Glu-202.

This sequence belongs to the eIF-2-beta/eIF-5 family. Heterotrimer composed of an alpha, a beta and a gamma chain.

Functionally, eIF-2 functions in the early steps of protein synthesis by forming a ternary complex with GTP and initiator tRNA. This chain is Translation initiation factor 2 subunit beta (eif2b), found in Thermoplasma acidophilum (strain ATCC 25905 / DSM 1728 / JCM 9062 / NBRC 15155 / AMRC-C165).